Consider the following 608-residue polypeptide: MPPFDSKAFLLSVTHQPGVYRMYNAEAEVIYVGKAKDLKKRLSSYFRSNIPSEKTKALVTHIAQIDVTVTHTETEALILEHNYIKQYLPKYNVLLRDDKSYPYIFISNHKHPRISIHRGTKRKKGEYFGPYPDSGAVRDSLHLIQKLFPIRQCEDSVYANRHRPCLMHQIGRCLAPCVKGIISDEDYAEQTEFIRLFLQGKDRQVIQSLVEQMEGASQALNFEKAATIRDQIQSMRRVQEQQYVSDESSDDLDVLGFTIENGLACIHLLMIRHGKILGSRSFFPKIPAKTEKEEVFSSFLTQYYLNHSQGRTIPNRVITSFEFESEGLEQALTELSGRKVLFQLNPKGMKGRYLKLADTNALSALTSKANHKLTVYQRFKQLEEALSLASIQRMECFDISHTMGEKTVASCVVFNQEGPVKSEYRRYNITGITGGDDYAAMAQVLERRYSKQLDIDKIPDIVFIDGGKGQLNRAYDVIRQHWGDWPKRPLLLGIAKGVTRKHGLETLVKITGEEFSMPSDSPALHLIQHIRDESHNHAISGHRAQRAKVRKTSTLQHIEGVGPKRRQALLQYLGGLQELKKASVEEISKVPGISRSLAEKIQDALKQG.

In terms of domain architecture, GIY-YIG spans 15 to 93 (HQPGVYRMYN…IKQYLPKYNV (79 aa)). One can recognise a UVR domain in the interval 203-238 (RQVIQSLVEQMEGASQALNFEKAATIRDQIQSMRRV).

It belongs to the UvrC family. As to quaternary structure, interacts with UvrB in an incision complex.

It localises to the cytoplasm. Functionally, the UvrABC repair system catalyzes the recognition and processing of DNA lesions. UvrC both incises the 5' and 3' sides of the lesion. The N-terminal half is responsible for the 3' incision and the C-terminal half is responsible for the 5' incision. This is UvrABC system protein C from Aliivibrio salmonicida (strain LFI1238) (Vibrio salmonicida (strain LFI1238)).